We begin with the raw amino-acid sequence, 90 residues long: MSEKDKMITRRDALRNIAVVVGSVATTTMMGVGVADAGSMPKAAVQYQDTPKGKDHCSVCAQFIAPHSCKVVAGNISPNGWCVAFVPKSA.

The tat-type signal signal peptide spans 1 to 37; that stretch reads MSEKDKMITRRDALRNIAVVVGSVATTTMMGVGVADA. [4Fe-4S] cluster is bound by residues C57, C60, C69, and C82.

Belongs to the high-potential iron-sulfur protein (HiPIP) family. As to quaternary structure, homomultimer. Predicted to be exported by the Tat system. The position of the signal peptide cleavage has been experimentally proven.

It localises to the periplasm. In terms of biological role, catalyzes the oxidation of Fe(2+) to Fe(3+) coupled to cytochrome c552 reduction. This Acidithiobacillus ferrooxidans (Thiobacillus ferrooxidans) protein is Iron oxidase (iro).